A 217-amino-acid chain; its full sequence is Grancalcin (217 aa).

4 EF-hand domains span residues 48–83 (SSAG…SGIN), 89–122 (FSLE…AALN), 119–154 (AALN…MGYR), and 155–180 (LSPQ…DYVA). 3 residues coordinate Ca(2+): Asp65, Asp69, and Glu71. Ca(2+) contacts are provided by Asp132, Asp134, Ser136, Thr138, and Glu143.

In terms of assembly, homodimer. Interacts with SRI and LCP1. As to expression, detected in neutrophils and macrophages (at protein level). Highly expressed in bone marrow.

It is found in the cytoplasm. Its subcellular location is the cytoplasmic granule membrane. Calcium-binding protein that may play a role in the adhesion of neutrophils to fibronectin. May play a role in the formation of focal adhesions. In Homo sapiens (Human), this protein is Grancalcin (GCA).